Reading from the N-terminus, the 770-residue chain is U3 small nucleolar RNA-associated protein 14 homolog A (770 aa).

Polar residues predominate over residues 1–17 (MNANQAAESNLLASNQQ). The tract at residues 1–65 (MNANQAAESN…GKDRQKLADR (65 aa)) is disordered. Phosphoserine occurs at positions 30, 32, and 53. Residues 41-68 (ERKHQKLLESISSLNGKDRQKLADRSEA) are a coiled coil. The span at 56 to 65 (GKDRQKLADR) shows a compositional bias: basic and acidic residues. 2 positions are modified to phosphoserine: S78 and S82. Position 206 is a phosphothreonine (T206). Coiled coils occupy residues 217–291 (SLEE…DKAR) and 318–348 (LEARQAMQEQLARNKELTQKVRAASESEEEG). Disordered regions lie at residues 334-361 (LTQKVRAASESEEEGEGQEEEEEPLVPD), 392-455 (KDLE…SSQE), and 467-505 (LRTENHQSGKQELSSARTAQREEPAREEEEPMLLQRPER). Composition is skewed to acidic residues over residues 343-358 (ESEEEGEGQEEEEEPL) and 396-410 (DPAEPEAQETSESEE). 2 positions are modified to phosphoserine: S406 and S408. Positions 411–444 (EKAVVEEETLLKEFEERRSLRQKSELNHMAEPVH) are enriched in basic and acidic residues. K449 participates in a covalent cross-link: Glycyl lysine isopeptide (Lys-Gly) (interchain with G-Cter in SUMO2). At S453 the chain carries Phosphoserine. A Phosphoserine modification is found at S567. At R588 the chain carries Citrulline. Residue K732 forms a Glycyl lysine isopeptide (Lys-Gly) (interchain with G-Cter in SUMO2) linkage.

It belongs to the UTP14 family. Interacts with DHX37. Citrullinated by PADI4.

It localises to the nucleus. The protein localises to the nucleolus. In terms of biological role, may be required for ribosome biogenesis. This chain is U3 small nucleolar RNA-associated protein 14 homolog A (UTP14A), found in Bos taurus (Bovine).